The primary structure comprises 395 residues: ATP phosphoribosyltransferase regulatory subunit (395 aa).

Belongs to the class-II aminoacyl-tRNA synthetase family. HisZ subfamily. In terms of assembly, heteromultimer composed of HisG and HisZ subunits.

The protein localises to the cytoplasm. Its pathway is amino-acid biosynthesis; L-histidine biosynthesis; L-histidine from 5-phospho-alpha-D-ribose 1-diphosphate: step 1/9. Its function is as follows. Required for the first step of histidine biosynthesis. May allow the feedback regulation of ATP phosphoribosyltransferase activity by histidine. The polypeptide is ATP phosphoribosyltransferase regulatory subunit (Pseudomonas syringae pv. tomato (strain ATCC BAA-871 / DC3000)).